A 96-amino-acid chain; its full sequence is Co-chaperonin GroES (96 aa).

It belongs to the GroES chaperonin family. Heptamer of 7 subunits arranged in a ring. Interacts with the chaperonin GroEL.

Its subcellular location is the cytoplasm. Functionally, together with the chaperonin GroEL, plays an essential role in assisting protein folding. The GroEL-GroES system forms a nano-cage that allows encapsulation of the non-native substrate proteins and provides a physical environment optimized to promote and accelerate protein folding. GroES binds to the apical surface of the GroEL ring, thereby capping the opening of the GroEL channel. This chain is Co-chaperonin GroES, found in Legionella micdadei (Tatlockia micdadei).